A 449-amino-acid polypeptide reads, in one-letter code: Gamma conglutin 1 (449 aa).

The first 33 residues, 1 to 33 (MARNMAHILHILVISLSYSFLFVSSSSQDSQSL), serve as a signal peptide directing secretion. The 370-residue stretch at 60–429 (HWANIHKRTP…DLERSRVGFN (370 aa)) folds into the Peptidase A1 domain. 5 cysteine pairs are disulfide-bonded: cysteine 88–cysteine 178, cysteine 102–cysteine 115, cysteine 107–cysteine 133, cysteine 118–cysteine 128, and cysteine 350–cysteine 391. An N-linked (GlcNAc...) asparagine glycan is attached at asparagine 130.

Belongs to the peptidase A1 family. In terms of assembly, two-subunit monomeric unit made of alpha and beta subunits coupled by disulfide bonds (at pH 4.5 and under non-reducing conditions). Can also form oligomers including dimer, tetramer and cyclic hexamer (trimer of dimers) (at pH &gt; 5.5). Component of globulins complexes which accumulate in seeds. Interacts with flavonoids (e.g. apigenin glucosides) present in globulins complexes. Forms a static complex with vitexin. Post-translationally, undergoes very complex post-translational maturation; the proteolytic processing leading to the formation of two alpha and beta subunits is incomplete, leaving a certain amount of the protein in an uncut form. Glycosylated on alpha chain. In terms of tissue distribution, expressed in developing cotyledons and in the embryonic axis of germinating seeds. Accumulates in seeds, especially in the protein bodies of developing cotyledonary cells (at protein level). Also detected, at low levels, in plumules and radicles.

The protein localises to the secreted. It localises to the extracellular space. In terms of biological role, sulfur-rich seed storage protein that remains undegraded at germination. This is Gamma conglutin 1 from Lupinus angustifolius (Narrow-leaved blue lupine).